The primary structure comprises 786 residues: Zinc finger transcription factor YRM1 (786 aa).

Residues 1–25 (MSKRGSLQDRASPSEETVKKAQKRR) are disordered. The segment at residues 31-59 (CAFCRKRKLRCDQQKPMCSTCKTRGRSGC) is a DNA-binding region (zn(2)-C6 fungal-type). The segment at 721–747 (PLAGNSPGLPPEEVRNNSENASHNNET) is disordered. Positions 737 to 747 (NSENASHNNET) are enriched in polar residues.

It is found in the cytoplasm. It localises to the nucleus. Its function is as follows. Transcription factor involved in the regulation of multidrug resistance genes. Acts in concert with YRR1. The polypeptide is Zinc finger transcription factor YRM1 (YRM1) (Saccharomyces cerevisiae (strain ATCC 204508 / S288c) (Baker's yeast)).